The primary structure comprises 370 residues: Phosphoribosylformylglycinamidine cyclo-ligase (370 aa).

Belongs to the AIR synthase family.

It localises to the cytoplasm. It carries out the reaction 2-formamido-N(1)-(5-O-phospho-beta-D-ribosyl)acetamidine + ATP = 5-amino-1-(5-phospho-beta-D-ribosyl)imidazole + ADP + phosphate + H(+). The protein operates within purine metabolism; IMP biosynthesis via de novo pathway; 5-amino-1-(5-phospho-D-ribosyl)imidazole from N(2)-formyl-N(1)-(5-phospho-D-ribosyl)glycinamide: step 2/2. This Rhodospirillum rubrum (strain ATCC 11170 / ATH 1.1.1 / DSM 467 / LMG 4362 / NCIMB 8255 / S1) protein is Phosphoribosylformylglycinamidine cyclo-ligase.